The sequence spans 265 residues: Large ribosomal subunit protein bL9m (265 aa).

The transit peptide at 1–49 (MAASVAPGVRTLWWAGAAWLRQGGIRELFRPRIEGSTPGRDFSLSHYQS) directs the protein to the mitochondrion.

This sequence belongs to the bacterial ribosomal protein bL9 family. As to quaternary structure, component of the mitochondrial ribosome large subunit (39S) which comprises a 16S rRNA and about 50 distinct proteins.

It localises to the mitochondrion. The sequence is that of Large ribosomal subunit protein bL9m (Mrpl9) from Mus musculus (Mouse).